Reading from the N-terminus, the 305-residue chain is NADH-cytochrome b5 reductase 1 (305 aa).

The chain crosses the membrane as a helical span at residues 8–28 (VLLASLGVGLFTLFGLALGTY). Positions 44–156 (DEKYLLRLLD…RGPSGLLSYA (113 aa)) constitute an FAD-binding FR-type domain. FAD contacts are provided by residues 136–166 (DSLK…IQPN) and 175–210 (VAKK…QCFL).

It belongs to the flavoprotein pyridine nucleotide cytochrome reductase family. It depends on FAD as a cofactor.

Its subcellular location is the membrane. It carries out the reaction 2 Fe(III)-[cytochrome b5] + NADH = 2 Fe(II)-[cytochrome b5] + NAD(+) + H(+). In terms of biological role, NADH-cytochrome b5 reductases are involved in desaturation and elongation of fatty acids, cholesterol biosynthesis, drug metabolism, and, in erythrocyte, methemoglobin reduction. The chain is NADH-cytochrome b5 reductase 1 (Cyb5r1) from Rattus norvegicus (Rat).